The following is a 303-amino-acid chain: RELT-like protein 2 (303 aa).

The chain crosses the membrane as a helical span at residues 15–35 (LYMLFLLVLVFFLMGLVGFMI). Disordered regions lie at residues 46 to 67 (CRTSRGSEPDDAQLQPPEDDDM) and 132 to 303 (CLHC…AGSM). A Phosphoserine modification is found at Ser-52. Composition is skewed to basic and acidic residues over residues 148–158 (RSKEGKSRPRT) and 172–188 (THIEKRYGLHEHRDGSP). The segment covering 194–212 (GSGGGQDPGGGQGSGGGQP) has biased composition (gly residues). Positions 278–296 (QEANGQPSKPDTSDHQVSL) are enriched in polar residues.

This sequence belongs to the RELT family. Interacts with RELT, RELL1 and OXSR1. Interacts with PLSCR1. Interacts with TRAF2. Post-translationally, phosphorylated in vitro by OXSR1. As to expression, primarily expressed in spleen, thymus, testis, peripheral blood leukocytes, brain and placenta. Not detected in prostate, ovary, small intestine, colon, heart, lung, liver, skeletal muscle, kidney and pancreas.

The protein localises to the cell membrane. In terms of biological role, induces activation of MAPK14/p38 cascade, when overexpressed. Induces apoptosis, when overexpressed. The protein is RELT-like protein 2 (RELL2) of Homo sapiens (Human).